The primary structure comprises 489 residues: N-succinylglutamate 5-semialdehyde dehydrogenase (489 aa).

Residue 223–228 (GSSRTG) coordinates NAD(+). Residues Glu-246 and Cys-280 contribute to the active site.

It belongs to the aldehyde dehydrogenase family. AstD subfamily.

It catalyses the reaction N-succinyl-L-glutamate 5-semialdehyde + NAD(+) + H2O = N-succinyl-L-glutamate + NADH + 2 H(+). It functions in the pathway amino-acid degradation; L-arginine degradation via AST pathway; L-glutamate and succinate from L-arginine: step 4/5. Catalyzes the NAD-dependent reduction of succinylglutamate semialdehyde into succinylglutamate. The polypeptide is N-succinylglutamate 5-semialdehyde dehydrogenase (Aeromonas hydrophila subsp. hydrophila (strain ATCC 7966 / DSM 30187 / BCRC 13018 / CCUG 14551 / JCM 1027 / KCTC 2358 / NCIMB 9240 / NCTC 8049)).